The primary structure comprises 178 residues: ATP synthase subunit b (178 aa).

A helical transmembrane segment spans residues 19 to 39 (ITGIGFVILLFIAIKYIVPAF).

Belongs to the ATPase B chain family. In terms of assembly, F-type ATPases have 2 components, F(1) - the catalytic core - and F(0) - the membrane proton channel. F(1) has five subunits: alpha(3), beta(3), gamma(1), delta(1), epsilon(1). F(0) has three main subunits: a(1), b(2) and c(10-14). The alpha and beta chains form an alternating ring which encloses part of the gamma chain. F(1) is attached to F(0) by a central stalk formed by the gamma and epsilon chains, while a peripheral stalk is formed by the delta and b chains.

It localises to the cell membrane. Its function is as follows. F(1)F(0) ATP synthase produces ATP from ADP in the presence of a proton or sodium gradient. F-type ATPases consist of two structural domains, F(1) containing the extramembraneous catalytic core and F(0) containing the membrane proton channel, linked together by a central stalk and a peripheral stalk. During catalysis, ATP synthesis in the catalytic domain of F(1) is coupled via a rotary mechanism of the central stalk subunits to proton translocation. In terms of biological role, component of the F(0) channel, it forms part of the peripheral stalk, linking F(1) to F(0). The sequence is that of ATP synthase subunit b from Kocuria rhizophila (strain ATCC 9341 / DSM 348 / NBRC 103217 / DC2201).